The primary structure comprises 179 residues: Large ribosomal subunit protein uL10 (179 aa).

Belongs to the universal ribosomal protein uL10 family. As to quaternary structure, part of the ribosomal stalk of the 50S ribosomal subunit. The N-terminus interacts with L11 and the large rRNA to form the base of the stalk. The C-terminus forms an elongated spine to which L12 dimers bind in a sequential fashion forming a multimeric L10(L12)X complex.

Functionally, forms part of the ribosomal stalk, playing a central role in the interaction of the ribosome with GTP-bound translation factors. This Polynucleobacter necessarius subsp. necessarius (strain STIR1) protein is Large ribosomal subunit protein uL10.